The primary structure comprises 455 residues: Phosphomethylpyrimidine synthase (455 aa).

Substrate-binding positions include Asn80, Met109, Tyr139, His175, 195–197, 236–239, and Glu275; these read SRG and DALR. His279 contributes to the Zn(2+) binding site. Residue Tyr302 participates in substrate binding. A Zn(2+)-binding site is contributed by His343. [4Fe-4S] cluster-binding residues include Cys423, Cys426, and Cys431.

This sequence belongs to the ThiC family. [4Fe-4S] cluster is required as a cofactor.

The enzyme catalyses 5-amino-1-(5-phospho-beta-D-ribosyl)imidazole + S-adenosyl-L-methionine = 4-amino-2-methyl-5-(phosphooxymethyl)pyrimidine + CO + 5'-deoxyadenosine + formate + L-methionine + 3 H(+). It functions in the pathway cofactor biosynthesis; thiamine diphosphate biosynthesis. In terms of biological role, catalyzes the synthesis of the hydroxymethylpyrimidine phosphate (HMP-P) moiety of thiamine from aminoimidazole ribotide (AIR) in a radical S-adenosyl-L-methionine (SAM)-dependent reaction. The polypeptide is Phosphomethylpyrimidine synthase (Synechococcus sp. (strain JA-3-3Ab) (Cyanobacteria bacterium Yellowstone A-Prime)).